A 317-amino-acid polypeptide reads, in one-letter code: MIFLTLEHILTHISFSVVSIVITIHLINLLVNEIVGLYNSSEKGMIVTLFCITGFLIIRWIYSGHFPLSNLYESLIFLSWNFSIINMLPYLKNLKNHLREITSPSTLFIQGFATSGLLTQIHEQKILVPALQSQWLMMHVSMMILSYASLLCGSLLSIALLVITFRKSRSVVGKRNKFLNRIFSNIQYINEREKILLKTSFTYSINYYRSHLLQQFDFWSYRIISIGFLFLTIGILSGAVWANEAWGSYWSWDPKETWAFITWTIFAIYLHIREKKNAEGVKSAIVASIGFLIIWICYFGINILGIGLHSYGSFPIS.

A run of 8 helical transmembrane segments spans residues 17–37, 44–64, 71–91, 101–121, 143–163, 223–243, 252–272, and 284–304; these read VVSI…IVGL, GMIV…IYSG, LYES…LPYL, ITSP…LTQI, MILS…LLVI, IISI…VWAN, WDPK…YLHI, and AIVA…INIL.

This sequence belongs to the CcmF/CycK/Ccl1/NrfE/CcsA family. In terms of assembly, may interact with Ccs1.

It localises to the plastid. The protein resides in the chloroplast thylakoid membrane. In terms of biological role, required during biogenesis of c-type cytochromes (cytochrome c6 and cytochrome f) at the step of heme attachment. This is Cytochrome c biogenesis protein CcsA from Pelargonium hortorum (Common geranium).